Reading from the N-terminus, the 364-residue chain is Fructose-bisphosphate aldolase A (364 aa).

Position 5 is a phosphotyrosine (Tyr5). Thr9 bears the Phosphothreonine mark. 2 positions are modified to phosphoserine: Ser36 and Ser39. Lys42 is subject to N6-acetyllysine; alternate. Lys42 participates in a covalent cross-link: Glycyl lysine isopeptide (Lys-Gly) (interchain with G-Cter in SUMO1); alternate. Residue Lys42 forms a Glycyl lysine isopeptide (Lys-Gly) (interchain with G-Cter in SUMO2); alternate linkage. Residue Arg43 coordinates beta-D-fructose 1,6-bisphosphate. A Phosphoserine modification is found at Ser46. Position 99 is an N6-(2-hydroxyisobutyryl)lysine (Lys99). An N6-acetyllysine modification is found at Lys108. N6-acetyllysine; alternate is present on Lys111. Lys111 carries the post-translational modification N6-malonyllysine; alternate. Residue Ser132 is modified to Phosphoserine. Lys147 carries the N6-(2-hydroxyisobutyryl)lysine modification. Glu188 functions as the Proton acceptor in the catalytic mechanism. The active-site Schiff-base intermediate with dihydroxyacetone-P is the Lys230. The residue at position 272 (Ser272) is a Phosphoserine. Beta-D-fructose 1,6-bisphosphate is bound by residues 272 to 274 (SGG), Ser301, and Arg304. An N6-malonyllysine modification is found at Lys312. The residue at position 330 (Lys330) is an N6-acetyllysine.

This sequence belongs to the class I fructose-bisphosphate aldolase family. As to quaternary structure, homotetramer. Interacts with SNX9 and WAS. Interacts with FBP2; the interaction blocks FBP2 inhibition by physiological concentrations of AMP and reduces inhibition by Ca(2+).

Its subcellular location is the cytoplasm. The protein localises to the myofibril. The protein resides in the sarcomere. It is found in the i band. It localises to the m line. It catalyses the reaction beta-D-fructose 1,6-bisphosphate = D-glyceraldehyde 3-phosphate + dihydroxyacetone phosphate. The protein operates within carbohydrate degradation; glycolysis; D-glyceraldehyde 3-phosphate and glycerone phosphate from D-glucose: step 4/4. Functionally, catalyzes the reversible conversion of beta-D-fructose 1,6-bisphosphate (FBP) into two triose phosphate and plays a key role in glycolysis and gluconeogenesis. In addition, may also function as scaffolding protein. In Pongo abelii (Sumatran orangutan), this protein is Fructose-bisphosphate aldolase A (ALDOA).